The sequence spans 186 residues: TATA box-binding protein-like 1 (186 aa).

This sequence belongs to the TBP family. Expressed ubiquitously with highest expression in the ovary and testis.

The protein resides in the cytoplasm. Its subcellular location is the nucleus. Its function is as follows. Part of a specialized transcription system that mediates the transcription of most ribosomal proteins through the 5'-TCT-3' motif which is a core promoter element at these genes. Seems to also mediate the transcription of NF1. Does not bind the TATA box. Members of the TBP family are differentially required to regulate transcription and development during early embryogenesis. Particularly regulates genes that have a role in catabolism. This is TATA box-binding protein-like 1 (tbpl1) from Xenopus laevis (African clawed frog).